A 510-amino-acid polypeptide reads, in one-letter code: ATP synthase subunit alpha (510 aa).

ATP is bound at residue 170 to 177; sequence GDRQTGKT.

This sequence belongs to the ATPase alpha/beta chains family. As to quaternary structure, F-type ATPases have 2 components, CF(1) - the catalytic core - and CF(0) - the membrane proton channel. CF(1) has five subunits: alpha(3), beta(3), gamma(1), delta(1), epsilon(1). CF(0) has three main subunits: a(1), b(2) and c(9-12). The alpha and beta chains form an alternating ring which encloses part of the gamma chain. CF(1) is attached to CF(0) by a central stalk formed by the gamma and epsilon chains, while a peripheral stalk is formed by the delta and b chains.

The protein localises to the cell inner membrane. It carries out the reaction ATP + H2O + 4 H(+)(in) = ADP + phosphate + 5 H(+)(out). In terms of biological role, produces ATP from ADP in the presence of a proton gradient across the membrane. The alpha chain is a regulatory subunit. This chain is ATP synthase subunit alpha, found in Caulobacter sp. (strain K31).